Reading from the N-terminus, the 483-residue chain is GTPase Der (483 aa).

2 EngA-type G domains span residues 3 to 167 (FTLA…GEER) and 212 to 387 (LRIA…EIWN). GTP is bound by residues 9 to 16 (GRPNVGKS), 56 to 60 (DTAGL), 119 to 122 (NKAE), 218 to 225 (GRPNAGKS), 265 to 269 (DTAGM), and 330 to 333 (NKWD). Residues 388 to 472 (RRISTGRLNR…PIRLSLRTSD (85 aa)) form the KH-like domain.

It belongs to the TRAFAC class TrmE-Era-EngA-EngB-Septin-like GTPase superfamily. EngA (Der) GTPase family. Associates with the 50S ribosomal subunit.

Its function is as follows. GTPase that plays an essential role in the late steps of ribosome biogenesis. The sequence is that of GTPase Der from Brucella suis biovar 1 (strain 1330).